Here is a 223-residue protein sequence, read N- to C-terminus: PKHD-type hydroxylase CPS_3426 (223 aa).

Residues 77–175 (KSMMPFIISE…RKVALTWIES (99 aa)) enclose the Fe2OG dioxygenase domain. Residues H96, D98, and H156 each contribute to the Fe cation site. R166 contributes to the 2-oxoglutarate binding site.

Fe(2+) serves as cofactor. It depends on L-ascorbate as a cofactor.

The chain is PKHD-type hydroxylase CPS_3426 from Colwellia psychrerythraea (strain 34H / ATCC BAA-681) (Vibrio psychroerythus).